Here is a 123-residue protein sequence, read N- to C-terminus: Small ribosomal subunit protein uS13 (123 aa).

The interval 97–123 is disordered; it reads PVRGQRTHTNAKTRKGRSKLPVAAKKK.

The protein belongs to the universal ribosomal protein uS13 family. In terms of assembly, part of the 30S ribosomal subunit. Forms a loose heterodimer with protein S19. Forms two bridges to the 50S subunit in the 70S ribosome.

In terms of biological role, located at the top of the head of the 30S subunit, it contacts several helices of the 16S rRNA. In the 70S ribosome it contacts the 23S rRNA (bridge B1a) and protein L5 of the 50S subunit (bridge B1b), connecting the 2 subunits; these bridges are implicated in subunit movement. Contacts the tRNAs in the A and P-sites. The polypeptide is Small ribosomal subunit protein uS13 (Ehrlichia canis (strain Jake)).